Reading from the N-terminus, the 527-residue chain is Probable malate:quinone oxidoreductase (527 aa).

This sequence belongs to the MQO family. FAD is required as a cofactor.

The enzyme catalyses (S)-malate + a quinone = a quinol + oxaloacetate. It functions in the pathway carbohydrate metabolism; tricarboxylic acid cycle; oxaloacetate from (S)-malate (quinone route): step 1/1. The protein is Probable malate:quinone oxidoreductase of Pectobacterium carotovorum subsp. carotovorum (strain PC1).